The chain runs to 396 residues: MSLETFPPPAGYNAPEQVHITQGDHNGRGMIISWVTSLNEDGSNVVTYWIASSDGSDNKSVIATTSSYRYFDYTSGYLHHAIIKELEYKTKYFYELGTGRSTRQFNLTPPKVGPDVPYTFGVIGDLGQTYASNQTLYNYMSNPKGQAVLFAGDLSYADDHPNHDQSKWDSYGRFVEPSAAYQPWIWAAGNHEIDYAQSIGETQPFKPYKNRYHVPYRASQNKYTPQNSWLQDEFKKVNRSETPWLIVLVHAPWYNSNNYHYMEGESMRVTFEPWFVENKVDIVFAGHVHAYERSERVSNIQYNITDGMSTPVKDQNAPVYITIGDGGNIEGIANIFTDPQPSYSAFREASFGHALLEIKNRTHAHYTWHRNKEDEAVIADSIWLKNRYYLPEEETI.

The signal sequence occupies residues 1–13 (MSLETFPPPAGYN). A glycan (N-linked (GlcNAc...) asparagine) is linked at N58. Residue D125 participates in Fe cation binding. Residue N133 is glycosylated (N-linked (GlcNAc...) asparagine). D153 and Y156 together coordinate Fe cation. D153 provides a ligand contact to Zn(2+). N190 contacts Zn(2+). N190 provides a ligand contact to substrate. Residue N238 is glycosylated (N-linked (GlcNAc...) asparagine). A Zn(2+)-binding site is contributed by H250. H260 acts as the Proton donor in catalysis. H287 is a binding site for Zn(2+). Substrate is bound at residue 287-289 (HVH). H289 contributes to the Fe cation binding site. N303 and N360 each carry an N-linked (GlcNAc...) asparagine glycan.

The protein belongs to the metallophosphoesterase superfamily. Purple acid phosphatase family. In terms of assembly, homodimer. It depends on Fe cation as a cofactor. Requires Zn(2+) as cofactor.

The protein resides in the secreted. The catalysed reaction is a phosphate monoester + H2O = an alcohol + phosphate. This is Purple acid phosphatase 5 (PAP5) from Arabidopsis thaliana (Mouse-ear cress).